Here is a 180-residue protein sequence, read N- to C-terminus: Iron sulfur cluster assembly protein 1, mitochondrial (180 aa).

This sequence belongs to the NifU family. Component of the core Fe-S cluster (ISC) assembly machinery. It depends on [2Fe-2S] cluster as a cofactor.

It is found in the mitochondrion matrix. It functions in the pathway cofactor biosynthesis; iron-sulfur cluster biosynthesis. In terms of biological role, scaffold protein for the de novo synthesis of iron-sulfur (Fe-S) clusters within mitochondria, which is required for maturation of both mitochondrial and cytoplasmic [2Fe-2S] and [4Fe-4S] proteins. First, a [2Fe-2S] cluster is transiently assembled on the scaffold protein ISU1. In a second step, the cluster is released from ISU1, transferred to a glutaredoxin, followed by the formation of mitochondrial [2Fe-2S] proteins, the synthesis of [4Fe-4S] clusters and their target-specific insertion into the recipient apoproteins. Cluster assembly on ISU1 depends on the function of the cysteine desulfurase complex NFS1-ISD11, which serves as the sulfur donor for cluster synthesis, the iron-binding protein frataxin as the putative iron donor, and the electron transfer chain comprised of ferredoxin reductase and ferredoxin, which receive their electrons from NADH. The protein is Iron sulfur cluster assembly protein 1, mitochondrial (ISU1) of Kluyveromyces lactis (strain ATCC 8585 / CBS 2359 / DSM 70799 / NBRC 1267 / NRRL Y-1140 / WM37) (Yeast).